The primary structure comprises 266 residues: N-acetyltransferase ECO1 (266 aa).

The CCHH-type zinc finger occupies 31–55 (KKCTECQMSYIIDSPADCAEHKKYH). Residues 108 to 266 (TPGKTAEVKA…SGELLIPCYI (159 aa)) form the N-acetyltransferase domain.

This sequence belongs to the acetyltransferase family. ECO subfamily.

The protein resides in the nucleus. In terms of biological role, probable acetyltransferase required for the establishment of sister chromatid cohesion and couple the processes of cohesion and DNA replication to ensure that only sister chromatids become paired together. In contrast to the structural cohesins, the deposition and establishment factors are required only during S phase. Acts by acetylating the cohesin complex component SMC3. In Eremothecium gossypii (strain ATCC 10895 / CBS 109.51 / FGSC 9923 / NRRL Y-1056) (Yeast), this protein is N-acetyltransferase ECO1 (ECO1).